The sequence spans 256 residues: Thiazole synthase (256 aa).

Residue Lys95 is the Schiff-base intermediate with DXP of the active site. Residues Gly156, 183–184 (AG), and 205–206 (NT) each bind 1-deoxy-D-xylulose 5-phosphate.

Belongs to the ThiG family. As to quaternary structure, homotetramer. Forms heterodimers with either ThiH or ThiS.

It is found in the cytoplasm. It carries out the reaction [ThiS sulfur-carrier protein]-C-terminal-Gly-aminoethanethioate + 2-iminoacetate + 1-deoxy-D-xylulose 5-phosphate = [ThiS sulfur-carrier protein]-C-terminal Gly-Gly + 2-[(2R,5Z)-2-carboxy-4-methylthiazol-5(2H)-ylidene]ethyl phosphate + 2 H2O + H(+). Its pathway is cofactor biosynthesis; thiamine diphosphate biosynthesis. In terms of biological role, catalyzes the rearrangement of 1-deoxy-D-xylulose 5-phosphate (DXP) to produce the thiazole phosphate moiety of thiamine. Sulfur is provided by the thiocarboxylate moiety of the carrier protein ThiS. In vitro, sulfur can be provided by H(2)S. The sequence is that of Thiazole synthase from Gluconacetobacter diazotrophicus (strain ATCC 49037 / DSM 5601 / CCUG 37298 / CIP 103539 / LMG 7603 / PAl5).